Reading from the N-terminus, the 210-residue chain is ATP-dependent Clp protease proteolytic subunit 1 (210 aa).

Catalysis depends on Ser106, which acts as the Nucleophile. The active site involves His131.

Belongs to the peptidase S14 family. Fourteen ClpP subunits assemble into 2 heptameric rings which stack back to back to give a disk-like structure with a central cavity, resembling the structure of eukaryotic proteasomes.

It localises to the cytoplasm. It carries out the reaction Hydrolysis of proteins to small peptides in the presence of ATP and magnesium. alpha-casein is the usual test substrate. In the absence of ATP, only oligopeptides shorter than five residues are hydrolyzed (such as succinyl-Leu-Tyr-|-NHMec, and Leu-Tyr-Leu-|-Tyr-Trp, in which cleavage of the -Tyr-|-Leu- and -Tyr-|-Trp bonds also occurs).. Its function is as follows. Cleaves peptides in various proteins in a process that requires ATP hydrolysis. Has a chymotrypsin-like activity. Plays a major role in the degradation of misfolded proteins. The sequence is that of ATP-dependent Clp protease proteolytic subunit 1 from Chelativorans sp. (strain BNC1).